The sequence spans 509 residues: Putative ATP-dependent RNA helicase QP509L (509 aa).

The Helicase ATP-binding domain occupies 110–262 (KKLLSPYGRF…KIIIHHLGQP (153 aa)). ATP is bound at residue 123-130 (LNTGLGKT). A DEAH box motif is present at residues 215 to 218 (DEAH).

It belongs to the DEAD box helicase family. DEAH subfamily.

The catalysed reaction is ATP + H2O = ADP + phosphate + H(+). This chain is Putative ATP-dependent RNA helicase QP509L, found in African swine fever virus (strain Badajoz 1971 Vero-adapted) (Ba71V).